Reading from the N-terminus, the 800-residue chain is Transducin beta-like protein 3 (800 aa).

Ala-2 carries the N-acetylalanine modification. WD repeat units follow at residues 64–105, 107–146, 149–190, 193–232, 245–284, 290–329, 332–372, 374–413, 419–459, 477–516, 519–560, 562–602, and 604–642; these read EDQE…RLWK, IHTAPVASMAFDATSTLLATGGCDGAVRVWDIVQHYGTHH, GSPG…CLAV, AHYSAVTSLSFSEDGHTMLSSGRDKICIVWDLRSYETSRT, LPEEPALALGVKNSGLHFLTAGDQGILRVWEAASGQCVYT, GLRQELTHCTLARAAGLLLTVTADHNLLLYEARSLQLQKQ, GYSE…CQIL, GHTDIVLALDVFRKGWLFASCAKDQSIRIWRMNKAGQVAC, GHTH…PSKN, CHDKDINSLAVSPNDKLLATGSQDRTAKLWALPQCQLLGV, GHRR…KTFE, HDAS…RTLD, and HEDKVWGLHCSRLDDHAITGGSDSRIILWKDVTEAEQAE. A Glycyl lysine isopeptide (Lys-Gly) (interchain with G-Cter in SUMO2) cross-link involves residue Lys-407.

In terms of assembly, part of the small subunit (SSU) processome, composed of more than 70 proteins and the RNA chaperone small nucleolar RNA (snoRNA) U3.

Its subcellular location is the nucleus. It localises to the nucleolus. Part of the small subunit (SSU) processome, first precursor of the small eukaryotic ribosomal subunit. During the assembly of the SSU processome in the nucleolus, many ribosome biogenesis factors, an RNA chaperone and ribosomal proteins associate with the nascent pre-rRNA and work in concert to generate RNA folding, modifications, rearrangements and cleavage as well as targeted degradation of pre-ribosomal RNA by the RNA exosome. The polypeptide is Transducin beta-like protein 3 (Tbl3) (Rattus norvegicus (Rat)).